Reading from the N-terminus, the 370-residue chain is Putative phosphoserine aminotransferase (370 aa).

The interval 1–22 (MAELTIPADLKPRDGRFGSGPS) is disordered. Arg-44 contributes to the L-glutamate binding site. The pyridoxal 5'-phosphate site is built by Phe-102, Thr-148, Asp-170, and Gln-193. Position 194 is an N6-(pyridoxal phosphate)lysine (Lys-194). 245 to 246 (NT) provides a ligand contact to pyridoxal 5'-phosphate.

It belongs to the class-V pyridoxal-phosphate-dependent aminotransferase family. SerC subfamily. In terms of assembly, homodimer. Requires pyridoxal 5'-phosphate as cofactor.

The protein resides in the cytoplasm. The enzyme catalyses O-phospho-L-serine + 2-oxoglutarate = 3-phosphooxypyruvate + L-glutamate. It catalyses the reaction 4-(phosphooxy)-L-threonine + 2-oxoglutarate = (R)-3-hydroxy-2-oxo-4-phosphooxybutanoate + L-glutamate. It functions in the pathway amino-acid biosynthesis; L-serine biosynthesis; L-serine from 3-phospho-D-glycerate: step 2/3. It participates in cofactor biosynthesis; pyridoxine 5'-phosphate biosynthesis; pyridoxine 5'-phosphate from D-erythrose 4-phosphate: step 3/5. Catalyzes the reversible conversion of 3-phosphohydroxypyruvate to phosphoserine and of 3-hydroxy-2-oxo-4-phosphonooxybutanoate to phosphohydroxythreonine. In Mycobacterium sp. (strain JLS), this protein is Putative phosphoserine aminotransferase.